The following is a 377-amino-acid chain: Probable O-methyltransferase 3 (377 aa).

Aspartate 241 contributes to the S-adenosyl-L-methionine binding site. The active-site Proton acceptor is the histidine 279.

Belongs to the class I-like SAM-binding methyltransferase superfamily. Cation-independent O-methyltransferase family. Highly expressed in lupulin glands. Detected in early-, mid- and late-stage cones.

The chain is Probable O-methyltransferase 3 from Humulus lupulus (European hop).